Consider the following 471-residue polypeptide: Putative multidrug resistance protein MdtD (471 aa).

The Periplasmic portion of the chain corresponds to 1-11; sequence MTDLPDSTRWQ. Residues 12–32 form a helical membrane-spanning segment; sequence LWIVAFGFFMQSLDTTIVNTA. Residues 33 to 48 lie on the Cytoplasmic side of the membrane; it reads LPSMAQSLGESPLHMH. Residues 49 to 69 form a helical membrane-spanning segment; the sequence is MVIVSYVLTVAVMLPASGWLA. Residues 70–76 are Periplasmic-facing; the sequence is DKVGVRN. A helical transmembrane segment spans residues 77-97; it reads IFFTAIVLFTLGSLFCALSGT. The Cytoplasmic segment spans residues 98–101; that stretch reads LNEL. The helical transmembrane segment at 102–124 threads the bilayer; it reads LLARALQGVGGAMMVPVGRLTVM. Topologically, residues 125 to 137 are periplasmic; the sequence is KIVPREQYMAAMT. The chain crosses the membrane as a helical span at residues 138-158; sequence FVTLPGQVGPLLGPALGGLLV. At 159 to 164 the chain is on the cytoplasmic side; it reads EYASWH. Residues 165–185 form a helical membrane-spanning segment; that stretch reads WIFLINIPVGIIGAIATLMLM. The Periplasmic segment spans residues 186-196; sequence PNYTMQTRRFD. A helical transmembrane segment spans residues 197 to 217; sequence LSGFLLLAVGMAVLTLALDGS. Residues 218–224 are Cytoplasmic-facing; the sequence is KGTGLSP. The chain crosses the membrane as a helical span at residues 225–245; that stretch reads LTIAGLVAVGVVALVLYLLHA. At 246-262 the chain is on the periplasmic side; sequence RNNNRALFSLKLFRTRT. A helical membrane pass occupies residues 263–283; it reads FSLGLAGSFAGRIGSGMLPFM. Over 284-285 the chain is Cytoplasmic; sequence TP. A helical transmembrane segment spans residues 286-306; it reads VFLQIGLGFSPFHAGLMMIPM. The Periplasmic portion of the chain corresponds to 307-341; it reads VLGSMGMKRIVVQVVNCFGYRRVLVATTLGLSLVT. Residues 342-362 traverse the membrane as a helical segment; it reads LLFMTTALLGWYYVLPFVLFL. Topologically, residues 363 to 395 are cytoplasmic; that stretch reads QGMVNSTRFSSMNTLTLKDLPDNLASSGNSLLS. The chain crosses the membrane as a helical span at residues 396 to 416; sequence MIMQLSMSIGVTIAGLLLGLF. The Periplasmic portion of the chain corresponds to 417–430; the sequence is GSQHVSVDSGTTQT. The chain crosses the membrane as a helical span at residues 431 to 451; that stretch reads VFMYTWLSMALIIALPAFIFA. At 452 to 471 the chain is on the cytoplasmic side; sequence RVPNDTHQNVAISRRKRSAQ.

Belongs to the major facilitator superfamily. TCR/Tet family.

Its subcellular location is the cell inner membrane. This Escherichia coli O139:H28 (strain E24377A / ETEC) protein is Putative multidrug resistance protein MdtD.